A 161-amino-acid chain; its full sequence is SsrA-binding protein (161 aa).

The protein belongs to the SmpB family.

The protein localises to the cytoplasm. Functionally, required for rescue of stalled ribosomes mediated by trans-translation. Binds to transfer-messenger RNA (tmRNA), required for stable association of tmRNA with ribosomes. tmRNA and SmpB together mimic tRNA shape, replacing the anticodon stem-loop with SmpB. tmRNA is encoded by the ssrA gene; the 2 termini fold to resemble tRNA(Ala) and it encodes a 'tag peptide', a short internal open reading frame. During trans-translation Ala-aminoacylated tmRNA acts like a tRNA, entering the A-site of stalled ribosomes, displacing the stalled mRNA. The ribosome then switches to translate the ORF on the tmRNA; the nascent peptide is terminated with the 'tag peptide' encoded by the tmRNA and targeted for degradation. The ribosome is freed to recommence translation, which seems to be the essential function of trans-translation. This is SsrA-binding protein from Vibrio parahaemolyticus serotype O3:K6 (strain RIMD 2210633).